The chain runs to 2346 residues: Highly reducing polyketide synthase claI (2346 aa).

The Ketosynthase family 3 (KS3) domain occupies threonine 10–aspartate 412. Catalysis depends on for beta-ketoacyl synthase activity residues cysteine 183, histidine 295, and histidine 335. A malonyl-CoA:ACP transacylase (MAT) domain region spans residues isoleucine 530–glutamate 842. The For malonyltransferase activity role is filled by serine 622. The segment at histidine 912–serine 1048 is N-terminal hotdog fold. The tract at residues histidine 912–aspartate 1213 is dehydratase (DH) domain. The PKS/mFAS DH domain occupies histidine 912–glutamine 1218. Histidine 944 acts as the Proton acceptor; for dehydratase activity in catalysis. Positions isoleucine 1060–glutamine 1218 are C-terminal hotdog fold. Catalysis depends on aspartate 1124, which acts as the Proton donor; for dehydratase activity. The interval glycine 1633–isoleucine 1946 is enoyl reductase (ER) domain. A ketoreductase (KR) domain region spans residues threonine 1972–alanine 2151. Residues serine 2258 to valine 2336 enclose the Carrier domain. O-(pantetheine 4'-phosphoryl)serine is present on serine 2296.

Pantetheine 4'-phosphate is required as a cofactor.

The protein operates within secondary metabolite biosynthesis. Highly reducing polyketide synthase; part of the cla gene cluster that produces clavatol and ortho-quinone methide. The clavatol biosynthesis cluster cla and the terrestric acid cluster tra are both involved in the production of peniphenones and penilactones. The non-reducing PKS claF is responsible for the formation of clavatol from successive condensations of 3 malonyl-CoA units, presumably with a simple acetyl-CoA starter unit, and 2 methylation steps. The esterase claE probably collaborates with claF by catalyzing the hydrolysis of ACP-bound acyl intermediates to free the ACP from stalled intermediates. The clavatol oxidase claD then converts clavatol to hydroxyclavatol. Spontaneous dehydration of hydroxyclavatol leads to the accumulation of the highly active ortho-quinone methide. On the other hand, the PKS-NRPS hybrid traA is involved in the formation of crustosic acid, with the help of traB and traD. The polyketide synthase module (PKS) of traA is responsible for the synthesis of the polyketide backbone via the condensation of an acetyl-CoA starter unit with 3 malonyl-CoA units. The downstream nonribosomal peptide synthetase (NRPS) module then amidates the carboxyl end of the polyketide with L-malic acid. Because traA lacks a designated enoylreductase (ER) domain, the required activity is provided the enoyl reductase traG. Crustosic acid undergoes decarboxylation and isomerization to the terrestric acid, catalyzed by the 2-oxoglutarate-dependent dioxygenase traH. Both acids are further converted to the 2 gamma-butyrolactones (R)-5-methyltetronic acid and (S)-5-carboxylmethyltetronic acid, with involvement of the cytochrome P450 monooxygenase claJ. Spontaneous addition of the methide to these gamma-butyrolactones leads to peniphenone D and penilactone D, which undergo again stereospecific attacking by methide to give penilactones A and B. The function of the highly reducing polyketide synthase claI has not been investigated yet. The polypeptide is Highly reducing polyketide synthase claI (Penicillium crustosum (Blue mold fungus)).